The sequence spans 305 residues: Ribonuclease BN (305 aa).

Residues H64, H66, D68, H69, H141, D212, and H270 each contribute to the Zn(2+) site. The active-site Proton acceptor is D68.

It belongs to the RNase Z family. RNase BN subfamily. As to quaternary structure, homodimer. It depends on Zn(2+) as a cofactor.

Its function is as follows. Zinc phosphodiesterase, which has both exoribonuclease and endoribonuclease activities. The chain is Ribonuclease BN from Escherichia coli O81 (strain ED1a).